A 302-amino-acid chain; its full sequence is Sulfate adenylyltransferase subunit 2 (302 aa).

It belongs to the PAPS reductase family. CysD subfamily. In terms of assembly, heterodimer composed of CysD, the smaller subunit, and CysN.

It catalyses the reaction sulfate + ATP + H(+) = adenosine 5'-phosphosulfate + diphosphate. Its pathway is sulfur metabolism; hydrogen sulfide biosynthesis; sulfite from sulfate: step 1/3. In terms of biological role, with CysN forms the ATP sulfurylase (ATPS) that catalyzes the adenylation of sulfate producing adenosine 5'-phosphosulfate (APS) and diphosphate, the first enzymatic step in sulfur assimilation pathway. APS synthesis involves the formation of a high-energy phosphoric-sulfuric acid anhydride bond driven by GTP hydrolysis by CysN coupled to ATP hydrolysis by CysD. The sequence is that of Sulfate adenylyltransferase subunit 2 from Shigella dysenteriae serotype 1 (strain Sd197).